A 73-amino-acid chain; its full sequence is UPF0154 protein PEPE_0872 (73 aa).

A helical transmembrane segment spans residues 5–25 (IWIMIVIIALLVGAVGGFFFA).

This sequence belongs to the UPF0154 family.

It localises to the cell membrane. The sequence is that of UPF0154 protein PEPE_0872 from Pediococcus pentosaceus (strain ATCC 25745 / CCUG 21536 / LMG 10740 / 183-1w).